A 1069-amino-acid polypeptide reads, in one-letter code: Protogenin B (1069 aa).

Residues 1 to 26 form the signal peptide; it reads MGSVRWKTHQQWLIIFWILSFSGVFG. The Extracellular segment spans residues 27–936; sequence FSELWFSIEP…LYHIDEKSMS (910 aa). 4 consecutive Ig-like domains span residues 30–117, 122–208, 221–308, and 312–396; these read LWFS…ARLT, LVFS…AELV, PLII…GNVT, and PSLV…SRLI. Disulfide bonds link cysteine 51-cysteine 100 and cysteine 143-cysteine 191. Residues asparagine 81, asparagine 88, asparagine 180, and asparagine 229 are each glycosylated (N-linked (GlcNAc...) asparagine). Residues cysteine 242 and cysteine 290 are joined by a disulfide bond. Asparagine 299 and asparagine 306 each carry an N-linked (GlcNAc...) asparagine glycan. Positions 317–336 are disordered; the sequence is KPESQTRPRAGTARFSCQAE. The cysteines at positions 333 and 380 are disulfide-linked. 5 consecutive Fibronectin type-III domains span residues 406-500, 502-601, 608-701, 711-804, and 809-904; these read APRN…TLED, PLRT…TPKT, PAPN…CPST, PPDH…TLLE, and PPES…VKGK. N-linked (GlcNAc...) asparagine glycans are attached at residues asparagine 458, asparagine 473, and asparagine 560. Over residues 590–605 the composition is skewed to polar residues; it reads PSAWSSHRTPKTSSAT. Residues 590–609 form a disordered region; sequence PSAWSSHRTPKTSSATVPPA. N-linked (GlcNAc...) asparagine glycans are attached at residues asparagine 618, asparagine 720, and asparagine 834. A helical membrane pass occupies residues 937–957; it reads GIIVGVCIALSCIILCIFILL. The Cytoplasmic segment spans residues 958 to 1069; sequence SKTQTQKSAS…KTVLCYEDEA (112 aa).

It belongs to the immunoglobulin superfamily. DCC family. Initially expressed in the ventral forebrain and ventral spinal cord. Later, also expressed in the midbrain and in parts of the diencephalon and hindbrain.

Its subcellular location is the membrane. Functionally, may play a role in anteroposterior axis elongation. The chain is Protogenin B from Danio rerio (Zebrafish).